The sequence spans 91 residues: Small ubiquitin-related modifier (91 aa).

The Ubiquitin-like domain maps to 13-91; sequence EYIKIKVVGQ…EVYQEQLGGF (79 aa). Glycine 90 participates in a covalent cross-link: Glycyl lysine isopeptide (Gly-Lys) (interchain with K-? in acceptor proteins). Phenylalanine 91 is a propeptide.

It belongs to the ubiquitin family. SUMO subfamily. As to quaternary structure, covalently attached to tbx-2. Covalently attached to lin-1. Covalently attached to lin-11. Covalently attached to sop-2. Covalently attached to bet-1. Cleavage of precursor form by ulp-1 is necessary for function.

The protein resides in the cytoplasm. Its subcellular location is the nucleus. The protein localises to the cytoskeleton. It is found in the spindle. It localises to the chromosome. The protein resides in the microtubule organizing center. Its subcellular location is the centrosome. Its function is as follows. Ubiquitin-like protein which can be covalently attached to target lysines as a monomer. Does not seem to be involved in protein degradation and may function as an antagonist of ubiquitin in the degradation process. Plays a role in a number of cellular processes such as nuclear transport, DNA replication and repair, mitosis and signal transduction. Covalent attachment to its substrates requires prior activation by the E1 complex aos-1-uba-2 and linkage to the E2 enzyme ubc-9, and can be promoted by an E3 ligase such as gei-17. Required for embryonic development, fertility, vulval morphogenesis and inhibition of vulval cell fates. Probably by sumoylating bet-1, prevents muscle myosin depletion in aging adults probably by preventing myoblast growth factor receptor egl-15 overexpression. Plays a role in the attenuation of the let-60/ras pathway. Plays a role in male tail tip morphogenesis. Plays a role in the mitochondrial stress response with its covalent attachment to transcription factors dve-1 and afts-1 negatively regulating the mitochondrial unfolded protein response. In Caenorhabditis elegans, this protein is Small ubiquitin-related modifier.